The sequence spans 517 residues: Nectin-1 (517 aa).

The first 30 residues, 1-30 (MARMGLAGAAGRWWGLALGLTAFFLPGVHS), serve as a signal peptide directing secretion. An Ig-like V-type domain is found at 31-141 (QVVQVNDSMY…GNRESQLNLT (111 aa)). At 31–355 (QVVQVNDSMY…GRRAGPVPTA (325 aa)) the chain is on the extracellular side. 3 N-linked (GlcNAc...) asparagine glycosylation sites follow: asparagine 36, asparagine 72, and asparagine 139. Cysteines 51 and 124 form a disulfide. Ig-like C2-type domains lie at 149 to 238 (WIEG…FKES) and 247 to 334 (PEVT…VNIT). Cystine bridges form between cysteine 172–cysteine 226 and cysteine 269–cysteine 316. N-linked (GlcNAc...) (complex) asparagine glycosylation occurs at asparagine 202. Residues 282–299 (WTTLNGSLPKGVEAQNRT) form an interaction with FGFR region. N-linked (GlcNAc...) asparagine glycosylation is found at asparagine 286, asparagine 297, asparagine 307, and asparagine 332. A helical membrane pass occupies residues 356–376 (IIGGVAGSILLVLIVVGGIVV). At 377 to 517 (ALRRRRHTFK…SFISKKEWYV (141 aa)) the chain is on the cytoplasmic side. The disordered stretch occupies residues 399–488 (GYSKAGIPQH…DGYGDRTLGY (90 aa)). 3 positions are modified to phosphoserine: serine 422, serine 434, and serine 435. Tyrosine 436 bears the Phosphotyrosine mark. Over residues 436 to 445 (YEEEEEEEEG) the composition is skewed to acidic residues. The span at 449–466 (GERKVGGPHPKYDEDAKR) shows a compositional bias: basic and acidic residues. At serine 511 the chain carries Phosphoserine.

This sequence belongs to the nectin family. As to quaternary structure, cis- and trans-homodimer. Can form trans-heterodimers with NECTIN3 and with NECTIN4. Interaction between NECTIN1 and NECTIN3 on the pre- and postsynaptic sites, respectively, initiates the formation of puncta adherentia junctions between axons and dendrites. Interacts (via cytoplasmic domain) with AFDN (via PDZ domain); this interaction recruits NECTIN1 to cadherin-based adherens junctions and provides a connection with the actin cytoskeleton. Interacts with integrin alphaV/beta3. Interacts (via Ig-like C2-type domain 2) with FGFR1, FGFR2 and FGFR3. In terms of assembly, (Microbial infection) Interacts with herpes simplex virus 1/HHV-1, herpes simplex virus 2/HHV-2, and pseudorabies virus/PRV envelope glycoprotein D. (Microbial infection) Ubiquitinated by CBL following infection by herpes simplex virus 1/HHV-1 and association with HHV-1 envelope glycoprotein D, leading to its removal from cell surface.

It is found in the cell membrane. The protein resides in the cell junction. It localises to the adherens junction. The protein localises to the presynaptic cell membrane. Its subcellular location is the secreted. In terms of biological role, cell adhesion molecule that promotes cell-cell contacts and plays important roles in the development of the nervous system. Acts by forming homophilic or heterophilic trans-dimers. Heterophilic interactions have been detected between NECTIN1 and NECTIN3 and between NECTIN1 and NECTIN4. Involved in axon guidance by promoting contacts between the commissural axons and the floor plate cells. Involved in synaptogegesis. Has some neurite outgrowth-promoting activity. Promotes formation of checkerboard-like cellular pattern of hair cells and supporting cells in the auditory epithelium via heterophilic interaction with NECTIN3: NECTIN1 is present in the membrane of hair cells and associates with NECTIN3 on supporting cells, thereby mediating heterotypic adhesion between these two cell types. Required for enamel mineralization. (Microbial infection) Acts as a receptor for herpes simplex virus 1/HHV-1, herpes simplex virus 2/HHV-2, and pseudorabies virus/PRV. Constitutes the major receptor for herpes simplex virus 1/HHV-1 entry into host cells. The sequence is that of Nectin-1 from Homo sapiens (Human).